We begin with the raw amino-acid sequence, 440 residues long: Putative purine permease YwdJ (440 aa).

Helical transmembrane passes span 3–23 (LVLG…VVPV), 39–59 (LIQS…LKGH), 67–87 (PAGL…TVFA), 96–116 (LQGA…FKVI), 130–150 (VYLL…ILGI), 156–176 (GVDG…FIMT), 188–208 (ILLA…AKPI), 231–251 (GLII…LASM), 283–303 (LLSG…AGFI), 314–334 (FMLG…MNTF), 341–361 (VGFA…FAEF), 374–394 (SIIG…ETAL), and 399–419 (PVFI…AIAA).

Belongs to the nucleobase:cation symporter-2 (NCS2) (TC 2.A.40) family.

It localises to the cell membrane. This chain is Putative purine permease YwdJ (ywdJ), found in Bacillus subtilis (strain 168).